A 549-amino-acid polypeptide reads, in one-letter code: Glucose-6-phosphate isomerase (549 aa).

Glutamate 352 serves as the catalytic Proton donor. Catalysis depends on residues histidine 383 and lysine 511.

This sequence belongs to the GPI family.

Its subcellular location is the cytoplasm. The catalysed reaction is alpha-D-glucose 6-phosphate = beta-D-fructose 6-phosphate. Its pathway is carbohydrate biosynthesis; gluconeogenesis. It participates in carbohydrate degradation; glycolysis; D-glyceraldehyde 3-phosphate and glycerone phosphate from D-glucose: step 2/4. In terms of biological role, catalyzes the reversible isomerization of glucose-6-phosphate to fructose-6-phosphate. This chain is Glucose-6-phosphate isomerase, found in Methylocella silvestris (strain DSM 15510 / CIP 108128 / LMG 27833 / NCIMB 13906 / BL2).